The primary structure comprises 34 residues: Photosystem II reaction center protein M (34 aa).

Residues 5 to 25 form a helical membrane-spanning segment; sequence ILGLTATALFIIIPTSFLLIL.

It belongs to the PsbM family. In terms of assembly, PSII is composed of 1 copy each of membrane proteins PsbA, PsbB, PsbC, PsbD, PsbE, PsbF, PsbH, PsbI, PsbJ, PsbK, PsbL, PsbM, PsbT, PsbX, PsbY, PsbZ, Psb30/Ycf12, at least 3 peripheral proteins of the oxygen-evolving complex and a large number of cofactors. It forms dimeric complexes.

It localises to the plastid. The protein resides in the chloroplast thylakoid membrane. One of the components of the core complex of photosystem II (PSII). PSII is a light-driven water:plastoquinone oxidoreductase that uses light energy to abstract electrons from H(2)O, generating O(2) and a proton gradient subsequently used for ATP formation. It consists of a core antenna complex that captures photons, and an electron transfer chain that converts photonic excitation into a charge separation. This subunit is found at the monomer-monomer interface. This chain is Photosystem II reaction center protein M, found in Stigeoclonium helveticum (Green alga).